The sequence spans 154 residues: Ubiquitin-conjugating enzyme E2 L5 (154 aa).

The UBC core domain maps to 2-149 (AASRRLMKEL…AEEFTKKYGE (148 aa)). Catalysis depends on C86, which acts as the Glycyl thioester intermediate.

This sequence belongs to the ubiquitin-conjugating enzyme family.

The catalysed reaction is S-ubiquitinyl-[E1 ubiquitin-activating enzyme]-L-cysteine + [E2 ubiquitin-conjugating enzyme]-L-cysteine = [E1 ubiquitin-activating enzyme]-L-cysteine + S-ubiquitinyl-[E2 ubiquitin-conjugating enzyme]-L-cysteine.. It participates in protein modification; protein ubiquitination. Its function is as follows. Catalyzes the covalent attachment of ubiquitin to other proteins. This chain is Ubiquitin-conjugating enzyme E2 L5, found in Homo sapiens (Human).